A 45-amino-acid chain; its full sequence is Large ribosomal subunit protein bL34 (45 aa).

The tract at residues 1 to 45 (MTKRTFGGTSRKRKRVSGFRVRMRSHTGRRVIRTRRKRGRSRLAA) is disordered. The segment covering 10-45 (SRKRKRVSGFRVRMRSHTGRRVIRTRRKRGRSRLAA) has biased composition (basic residues).

This sequence belongs to the bacterial ribosomal protein bL34 family.

The chain is Large ribosomal subunit protein bL34 from Synechococcus sp. (strain CC9311).